An 80-amino-acid chain; its full sequence is Protein CEBPZOS (80 aa).

A helical transmembrane segment spans residues 15–32 (GVLVAELVGVFGAYFLFS).

It is found in the mitochondrion membrane. This chain is Protein CEBPZOS, found in Homo sapiens (Human).